A 507-amino-acid chain; its full sequence is AMSH-like ubiquitin thioesterase 1 (507 aa).

The region spanning 333-463 is the MPN domain; sequence LHIATSMMDT…IFRLTTPGGM (131 aa). Residues H411, H413, D424, H426, C469, H475, and H477 each contribute to the Zn(2+) site. Residues 411-424 carry the JAMM motif motif; it reads HTHPTQSCFMSSID.

Belongs to the peptidase M67C family. Zn(2+) is required as a cofactor.

It is found in the membrane. The protein localises to the cytoplasm. In terms of biological role, zinc metalloprotease that cleaves 'Lys-48'- and 'Lys-63'-linked polyubiquitin chains. The protein is AMSH-like ubiquitin thioesterase 1 (AMSH1) of Arabidopsis thaliana (Mouse-ear cress).